The sequence spans 186 residues: Ribosome-recycling factor (186 aa).

It belongs to the RRF family.

Its subcellular location is the cytoplasm. Its function is as follows. Responsible for the release of ribosomes from messenger RNA at the termination of protein biosynthesis. May increase the efficiency of translation by recycling ribosomes from one round of translation to another. This is Ribosome-recycling factor from Cupriavidus necator (strain ATCC 17699 / DSM 428 / KCTC 22496 / NCIMB 10442 / H16 / Stanier 337) (Ralstonia eutropha).